Here is a 165-residue protein sequence, read N- to C-terminus: Ubiquitin-fold modifier-conjugating enzyme 1 (165 aa).

The active-site Glycyl thioester intermediate is C116.

This sequence belongs to the ubiquitin-conjugating enzyme family. UFC1 subfamily.

Functionally, E2-like enzyme which forms an intermediate with UFM1 via a thioester linkage. The polypeptide is Ubiquitin-fold modifier-conjugating enzyme 1 (Drosophila mojavensis (Fruit fly)).